The primary structure comprises 234 residues: Elongation factor Tu, chloroplastic (234 aa).

The tr-type G domain occupies 1–125 (KNMITGAAQM…KVDSYIPTPE (125 aa)). 47–50 (NKQD) contacts GTP.

It belongs to the TRAFAC class translation factor GTPase superfamily. Classic translation factor GTPase family. EF-Tu/EF-1A subfamily.

The protein localises to the plastid. Its subcellular location is the chloroplast. The catalysed reaction is GTP + H2O = GDP + phosphate + H(+). In terms of biological role, GTP hydrolase that promotes the GTP-dependent binding of aminoacyl-tRNA to the A-site of ribosomes during protein biosynthesis. The polypeptide is Elongation factor Tu, chloroplastic (tufA) (Pandorina morum (Freshwater green alga)).